The sequence spans 859 residues: ATP-dependent RNA helicase DDX24 (859 aa).

Residue K17 is modified to N6-acetyllysine. S60 bears the Phosphoserine mark. A disordered region spans residues 61 to 170 (PAKNPSSLFS…KGLEPSQSTA (110 aa)). K71 bears the N6-acetyllysine mark. S82 and S94 each carry phosphoserine. A compositionally biased stretch (basic residues) spans 94 to 105 (SPKKKIKLKKSK). A compositionally biased stretch (polar residues) spans 106 to 115 (NVATEGTSTQ). The segment covering 125 to 139 (LEAQGDDMVCDDPEA) has biased composition (acidic residues). The Q motif motif lies at 192–220 (SAWKDLFVPRPVLRALSFLGFSAPTPIQA). Residues 224–528 (APAIRDKLDI…RILHKKHTKK (305 aa)) form the Helicase ATP-binding domain. 237-244 (AETGSGKT) provides a ligand contact to ATP. The disordered stretch occupies residues 262 to 300 (NAAPPPSNTEAPPGETRTEAGAETRSPGKAEAESDALPD). Positions 277–293 (TRTEAGAETRSPGKAEA) are enriched in basic and acidic residues. S287 and S295 each carry phosphoserine. A Phosphothreonine modification is found at T302. Positions 326–376 (SDQALLFGDDDAGEGPSSLIREKPVPKQNENEEENLDKEQTGNLKQELDDK) are disordered. Residue K370 forms a Glycyl lysine isopeptide (Lys-Gly) (interchain with G-Cter in SUMO2) linkage. Residues 471–474 (DEAD) carry the DEAD box motif. The region spanning 578-723 (YLYYFLMQYP…LFPVQTKYMD (146 aa)) is the Helicase C-terminal domain. Glycyl lysine isopeptide (Lys-Gly) (interchain with G-Cter in SUMO2) cross-links involve residues K624, K808, and K825. Polar residues-rich tracts occupy residues 799 to 814 (PLFTESQKTKYPTQSG) and 823 to 833 (PSKSESALSCL). The disordered stretch occupies residues 799-859 (PLFTESQKTK…EQPQPSTSAN (61 aa)).

This sequence belongs to the DEAD box helicase family. DDX24/MAK5 subfamily. In terms of assembly, interacts with FADD. Interacts with RIPK1; this interaction disrupts RLR signaling activation of IFN-dependent transcription factor IRF7. Interacts with NIP7. Interacts with EP300; this interaction prevents TP53 acetylation mediated by EP300. As to quaternary structure, (Microbial infection) Interacts with HIV-1 virus Gag and Rev proteins. In terms of processing, ubiquitinated by MDM2 without targeting DDX24 for proteasomal degradation. Instead, polyubiquitinated DDX24 promotes interaction with NIP7, a component of pre-rRNP processing complex, and associates with pre-rRNA molecules and pre-ribosomal particles. Ubiquitous. Most abundant in heart and brain, but with lowest levels in thymus and small intestine.

It is found in the cytoplasm. The protein localises to the nucleus. It carries out the reaction ATP + H2O = ADP + phosphate + H(+). Functionally, ATP-dependent RNA helicase that plays a role in various aspects of RNA metabolism including pre-mRNA splicing and is thereby involved in different biological processes such as cell cycle regulation or innate immunity. Plays an inhibitory role in TP53 transcriptional activity and subsequently in TP53 controlled cell growth arrest and senescence by inhibiting its EP300 mediated acetylation. Negatively regulates cytosolic RNA-mediated innate immune signaling at least in part by affecting RIPK1/IRF7 interactions. Alternatively, possesses antiviral activity by recognizing gammaherpesvirus transcripts in the context of lytic reactivation. Plays an essential role in cell cycle regulation in vascular smooth muscle cells by interacting with and regulating FANCA (Fanconi anemia complementation group A) mRNA. In terms of biological role, (Microbial infection) Plays a positive role in HIV-1 infection by promoting Rev-dependent nuclear export of viral RNAs and their packaging into virus particles. In Homo sapiens (Human), this protein is ATP-dependent RNA helicase DDX24 (DDX24).